The chain runs to 362 residues: 4-hydroxytryptamine kinase (362 aa).

ATP-binding positions include Asn37, Lys57, and 118–120; that span reads QDV. Residue Asp224 is part of the active site. 249-251 contributes to the ATP binding site; that stretch reads DWE.

It belongs to the methylthioribose kinase family. As to quaternary structure, monomer. Requires Mg(2+) as cofactor.

It carries out the reaction 4-hydroxytryptamine + ATP = norbaeocystin + ADP + H(+). It catalyses the reaction psilocin + ATP = psilocybin + ADP + H(+). The catalysed reaction is 4-hydroxy-N,N,N-trimethyltryptamine + ATP = aeruginascin + ADP + H(+). It functions in the pathway secondary metabolite biosynthesis. In terms of biological role, 4-hydroxytryptamine kinase; part of the gene cluster that mediates the biosynthesis of psilocybin, a psychotropic tryptamine-derived natural product. The first step in the pathway is the decarboxylation of L-tryptophan to tryptamine by the decarboxylase psiD. 4-hydroxy-L-tryptophan is accepted as substrate by psiD as well. The cytochrome P450 monooxygenase psiH then converts tryptamine to 4-hydroxytryptamine. The kinase psiK catalyzes the 4-O-phosphorylation step by converting 4-hydroxytryptamine into norbaeocystin. The methyltransferase psiM then catalyzes iterative methyl transfer to the amino group of norbaeocystin to yield psilocybin via a monomethylated intermediate, baeocystin. 4-hydroxy-6-methyl-l-tryptophancan also be converted the decarboxylase PsiD, kinase PsiK, and methyltransferase PsiM into respectively 6-methyl-norbaeocystin, 6-methylbaeocystin, and 6-methylpsilocybin. PsiK kinase can also turn psilocin into psilocybin. This activity may represent a protective mechanism to rephosphorylate the unstable psilocin to the stable psilocybin in case of intracellular ester cleavage. Moreover, psiK is able to O-phosphorylate the quaternary amine 4-hydroxy-N,N,N-trimethyltryptamine (4-OH-TMT) to yield aeruginascin, another bioactive compound found in Psilocybe species. This Psilocybe cubensis (Psychedelic mushroom) protein is 4-hydroxytryptamine kinase.